The primary structure comprises 424 residues: Glutathione reductase (424 aa).

K8 provides a ligand contact to FAD. Y56 contacts glutathione. A72 lines the FAD pocket. NADP(+) is bound by residues A137, I140, E143, R160, R166, and G236. An FAD-binding site is contributed by D277. Position 283 (L283) interacts with NADP(+). Residue T285 coordinates FAD. R293 provides a ligand contact to glutathione. An NADP(+)-binding site is contributed by V316. H413 is an FAD binding site. H413 (proton acceptor) is an active-site residue.

The protein belongs to the class-I pyridine nucleotide-disulfide oxidoreductase family. As to quaternary structure, homodimer; disulfide-linked. It depends on FAD as a cofactor.

The protein localises to the mitochondrion. It localises to the cytoplasm. It catalyses the reaction 2 glutathione + NADP(+) = glutathione disulfide + NADPH + H(+). Catalyzes the reduction of glutathione disulfide (GSSG) to reduced glutathione (GSH). Constitutes the major mechanism to maintain a high GSH:GSSG ratio in the cytosol. The chain is Glutathione reductase (Gsr) from Rattus norvegicus (Rat).